The primary structure comprises 365 residues: tRNA/tmRNA (uracil-C(5))-methyltransferase (365 aa).

Residues Q188, Y216, N221, E237, and D297 each contribute to the S-adenosyl-L-methionine site. C322 acts as the Nucleophile in catalysis. Residue E356 is the Proton acceptor of the active site.

It belongs to the class I-like SAM-binding methyltransferase superfamily. RNA M5U methyltransferase family. TrmA subfamily.

It catalyses the reaction uridine(54) in tRNA + S-adenosyl-L-methionine = 5-methyluridine(54) in tRNA + S-adenosyl-L-homocysteine + H(+). The catalysed reaction is uridine(341) in tmRNA + S-adenosyl-L-methionine = 5-methyluridine(341) in tmRNA + S-adenosyl-L-homocysteine + H(+). Its function is as follows. Dual-specificity methyltransferase that catalyzes the formation of 5-methyluridine at position 54 (m5U54) in all tRNAs, and that of position 341 (m5U341) in tmRNA (transfer-mRNA). The protein is tRNA/tmRNA (uracil-C(5))-methyltransferase of Aggregatibacter aphrophilus (strain NJ8700) (Haemophilus aphrophilus).